Here is a 434-residue protein sequence, read N- to C-terminus: Bifunctional protein GlmU (434 aa).

Positions 1 to 226 (MNKNKISIVI…ENEYKGVNSK (226 aa)) are pyrophosphorylase. Residues 11–14 (LAAG), Lys-25, Gln-77, and 84–85 (GT) each bind UDP-N-acetyl-alpha-D-glucosamine. A Mg(2+)-binding site is contributed by Asp-105. The UDP-N-acetyl-alpha-D-glucosamine site is built by Gly-138, Glu-152, Asn-167, and Asn-224. Asn-224 is a Mg(2+) binding site. The linker stretch occupies residues 227–247 (KDLSDAEIIMQDKIKNSLMES). Residues 248 to 434 (GVTMQLPSTI…DFYYKFFAKK (187 aa)) form an N-acetyltransferase region. Residues Arg-311 and Lys-328 each coordinate UDP-N-acetyl-alpha-D-glucosamine. The active-site Proton acceptor is the His-339. UDP-N-acetyl-alpha-D-glucosamine-binding residues include Tyr-342 and Asn-353. Residues Ala-356, 362 to 363 (NY), Ser-381, and Ala-399 each bind acetyl-CoA.

The protein in the N-terminal section; belongs to the N-acetylglucosamine-1-phosphate uridyltransferase family. This sequence in the C-terminal section; belongs to the transferase hexapeptide repeat family. In terms of assembly, homotrimer. It depends on Mg(2+) as a cofactor.

The protein resides in the cytoplasm. It carries out the reaction alpha-D-glucosamine 1-phosphate + acetyl-CoA = N-acetyl-alpha-D-glucosamine 1-phosphate + CoA + H(+). It catalyses the reaction N-acetyl-alpha-D-glucosamine 1-phosphate + UTP + H(+) = UDP-N-acetyl-alpha-D-glucosamine + diphosphate. It participates in nucleotide-sugar biosynthesis; UDP-N-acetyl-alpha-D-glucosamine biosynthesis; N-acetyl-alpha-D-glucosamine 1-phosphate from alpha-D-glucosamine 6-phosphate (route II): step 2/2. The protein operates within nucleotide-sugar biosynthesis; UDP-N-acetyl-alpha-D-glucosamine biosynthesis; UDP-N-acetyl-alpha-D-glucosamine from N-acetyl-alpha-D-glucosamine 1-phosphate: step 1/1. It functions in the pathway bacterial outer membrane biogenesis; LPS lipid A biosynthesis. Functionally, catalyzes the last two sequential reactions in the de novo biosynthetic pathway for UDP-N-acetylglucosamine (UDP-GlcNAc). The C-terminal domain catalyzes the transfer of acetyl group from acetyl coenzyme A to glucosamine-1-phosphate (GlcN-1-P) to produce N-acetylglucosamine-1-phosphate (GlcNAc-1-P), which is converted into UDP-GlcNAc by the transfer of uridine 5-monophosphate (from uridine 5-triphosphate), a reaction catalyzed by the N-terminal domain. This Sulfurimonas denitrificans (strain ATCC 33889 / DSM 1251) (Thiomicrospira denitrificans (strain ATCC 33889 / DSM 1251)) protein is Bifunctional protein GlmU.